A 196-amino-acid chain; its full sequence is ATP-dependent Clp protease proteolytic subunit (196 aa).

Residue Ser96 is the Nucleophile of the active site. His121 is an active-site residue.

It belongs to the peptidase S14 family. In terms of assembly, fourteen ClpP subunits assemble into 2 heptameric rings which stack back to back to give a disk-like structure with a central cavity, resembling the structure of eukaryotic proteasomes.

Its subcellular location is the cytoplasm. It carries out the reaction Hydrolysis of proteins to small peptides in the presence of ATP and magnesium. alpha-casein is the usual test substrate. In the absence of ATP, only oligopeptides shorter than five residues are hydrolyzed (such as succinyl-Leu-Tyr-|-NHMec, and Leu-Tyr-Leu-|-Tyr-Trp, in which cleavage of the -Tyr-|-Leu- and -Tyr-|-Trp bonds also occurs).. In terms of biological role, cleaves peptides in various proteins in a process that requires ATP hydrolysis. Has a chymotrypsin-like activity. Plays a major role in the degradation of misfolded proteins. This Streptococcus agalactiae serotype III (strain NEM316) protein is ATP-dependent Clp protease proteolytic subunit.